The following is a 361-amino-acid chain: Cyclin-Y-like protein 2 (361 aa).

Positions 204–286 (MRLTAEFAIV…QFLKLINYNN (83 aa)) constitute a Cyclin N-terminal domain.

Belongs to the cyclin family. Cyclin Y subfamily.

This Homo sapiens (Human) protein is Cyclin-Y-like protein 2 (CCNYL2).